The chain runs to 288 residues: AA9 family lytic polysaccharide monooxygenase A (288 aa).

A signal peptide spans 1–22; that stretch reads MKSTSATKFSVLAAATFAAAHG. Positions 21 and 104 each coordinate Cu(2+). 2 disulfides stabilise this stretch: cysteine 74–cysteine 191 and cysteine 115–cysteine 119. An N-linked (GlcNAc...) asparagine glycan is attached at asparagine 151. Residues histidine 177 and glutamine 186 each coordinate O2. Tyrosine 188 serves as a coordination point for Cu(2+). A disordered region spans residues 236–270; that stretch reads PEPYKSGSGSSDNAAEAVSSAAAEEPAAAATSAAA. Positions 249–270 are enriched in low complexity; it reads AAEAVSSAAAEEPAAAATSAAA.

Belongs to the polysaccharide monooxygenase AA9 family. Cu(2+) serves as cofactor.

It is found in the secreted. It carries out the reaction [(1-&gt;4)-beta-D-glucosyl]n+m + reduced acceptor + O2 = 4-dehydro-beta-D-glucosyl-[(1-&gt;4)-beta-D-glucosyl]n-1 + [(1-&gt;4)-beta-D-glucosyl]m + acceptor + H2O.. Lytic polysaccharide monooxygenase (LPMO) that depolymerizes crystalline and amorphous polysaccharides via the oxidation of scissile alpha- or beta-(1-4)-glycosidic bonds, yielding C1 and C4 oxidation products. Catalysis by LPMOs requires the reduction of the active-site copper from Cu(II) to Cu(I) by a reducing agent and H(2)O(2) or O(2) as a cosubstrate. Active on cellulose and on xyloglucan for deconstruction of plant biomass. This chain is AA9 family lytic polysaccharide monooxygenase A, found in Geotrichum candidum (Oospora lactis).